Here is a 342-residue protein sequence, read N- to C-terminus: Probable allantoicase (342 aa).

The protein belongs to the allantoicase family.

The catalysed reaction is allantoate + H2O = (S)-ureidoglycolate + urea. The protein operates within nitrogen metabolism; (S)-allantoin degradation; (S)-ureidoglycolate from allantoate (aminidohydrolase route): step 1/1. Functionally, utilization of purines as secondary nitrogen sources, when primary sources are limiting. This is Probable allantoicase from Schizosaccharomyces pombe (strain 972 / ATCC 24843) (Fission yeast).